A 670-amino-acid polypeptide reads, in one-letter code: Neutral ceramidase (670 aa).

Residues 1–24 (MSRSAFTALLLSCVLLALSMPARA) form the signal peptide. Mg(2+) is bound at residue His61. 3 residues coordinate substrate: Asn84, Gln92, and Asp111. His121 is a binding site for Zn(2+). Residue Ser130 participates in substrate binding. A Zn(2+)-binding site is contributed by His228. The active-site Nucleophile is the Ser274. An intrachain disulfide couples Cys346 to Cys394. Glu435 contacts Zn(2+). A substrate-binding site is contributed by Tyr469. A Zn(2+)-binding site is contributed by Tyr472. Mg(2+) is bound by residues Asp603, Asp605, and Thr608. Residues 644 to 670 (NAKNFWTQKISEIGGSTRSFEVLGTTP) are required for correct folding and localization.

This sequence belongs to the neutral ceramidase family. In terms of assembly, homodimer. It depends on Zn(2+) as a cofactor. The cofactor is Mg(2+).

The protein localises to the secreted. It catalyses the reaction an N-acylsphing-4-enine + H2O = sphing-4-enine + a fatty acid. Inhibited by EDTA, EGTA and D/L-sphinganine D-erythro-sphingosine. L-erythro-sphingosine is a less powerful inhibitor. Stimulated by glycerophospholipids: cardiolipin is the most effective, followed by phosphatidic acid, phosphatidylethanolamine and phosphatidylglycerol, whereas phosphatidylcholine, lysophosphatidic acid and diacylglycerol are less effective. Functionally, catalyzes the cleavage of the N-acyl linkage of the ceramides (Cers) to yield sphingosine (Sph) and free fatty acid at an optimal pH of 8-9. Also catalyzes the synthesis of Cers from Sph and fatty acid. This Pseudomonas aeruginosa (strain ATCC 15692 / DSM 22644 / CIP 104116 / JCM 14847 / LMG 12228 / 1C / PRS 101 / PAO1) protein is Neutral ceramidase.